The primary structure comprises 261 residues: Cytochrome c oxidase subunit 3 (261 aa).

Topologically, residues 1–15 are mitochondrial matrix; the sequence is MAHQSHAYHMVKPSP. A helical membrane pass occupies residues 16–34; it reads WPLTGALSALLTTSGLTMW. Over 35-40 the chain is Mitochondrial intermembrane; the sequence is FHFHST. A helical membrane pass occupies residues 41–66; that stretch reads TLLLTGLLTNALTMYQWWRDVVREST. The Mitochondrial matrix segment spans residues 67 to 72; sequence YQGHHT. A helical membrane pass occupies residues 73–105; sequence LPVQKGLRYGMILFITSEVFFFAGFFWAFYHSS. The Mitochondrial intermembrane portion of the chain corresponds to 106–128; that stretch reads LAPTPQLGGHWPPTGIIPLNPLE. Residues 129–152 form a helical membrane-spanning segment; sequence VPLLNTSVLLASGVSITWAHHSLM. Topologically, residues 153–155 are mitochondrial matrix; it reads ENN. Residues 156-183 traverse the membrane as a helical segment; that stretch reads RTQMIQALLITILLGIYFTLLQASEYIE. At 184 to 190 the chain is on the mitochondrial intermembrane side; the sequence is APFTISD. A helical membrane pass occupies residues 191-223; sequence GIYGSTFFMATGFHGLHVIIGSTFLTVCLARQL. Residues 224–232 are Mitochondrial matrix-facing; that stretch reads LFHFTSKHH. The chain crosses the membrane as a helical span at residues 233-256; that stretch reads FGFEAAAWYWHFVDVVWLFLYVSI. Residues 257 to 261 lie on the Mitochondrial intermembrane side of the membrane; sequence YWWGS.

The protein belongs to the cytochrome c oxidase subunit 3 family. Component of the cytochrome c oxidase (complex IV, CIV), a multisubunit enzyme composed of 14 subunits. The complex is composed of a catalytic core of 3 subunits MT-CO1, MT-CO2 and MT-CO3, encoded in the mitochondrial DNA, and 11 supernumerary subunits COX4I, COX5A, COX5B, COX6A, COX6B, COX6C, COX7A, COX7B, COX7C, COX8 and NDUFA4, which are encoded in the nuclear genome. The complex exists as a monomer or a dimer and forms supercomplexes (SCs) in the inner mitochondrial membrane with NADH-ubiquinone oxidoreductase (complex I, CI) and ubiquinol-cytochrome c oxidoreductase (cytochrome b-c1 complex, complex III, CIII), resulting in different assemblies (supercomplex SCI(1)III(2)IV(1) and megacomplex MCI(2)III(2)IV(2)).

Its subcellular location is the mitochondrion inner membrane. The enzyme catalyses 4 Fe(II)-[cytochrome c] + O2 + 8 H(+)(in) = 4 Fe(III)-[cytochrome c] + 2 H2O + 4 H(+)(out). In terms of biological role, component of the cytochrome c oxidase, the last enzyme in the mitochondrial electron transport chain which drives oxidative phosphorylation. The respiratory chain contains 3 multisubunit complexes succinate dehydrogenase (complex II, CII), ubiquinol-cytochrome c oxidoreductase (cytochrome b-c1 complex, complex III, CIII) and cytochrome c oxidase (complex IV, CIV), that cooperate to transfer electrons derived from NADH and succinate to molecular oxygen, creating an electrochemical gradient over the inner membrane that drives transmembrane transport and the ATP synthase. Cytochrome c oxidase is the component of the respiratory chain that catalyzes the reduction of oxygen to water. Electrons originating from reduced cytochrome c in the intermembrane space (IMS) are transferred via the dinuclear copper A center (CU(A)) of subunit 2 and heme A of subunit 1 to the active site in subunit 1, a binuclear center (BNC) formed by heme A3 and copper B (CU(B)). The BNC reduces molecular oxygen to 2 water molecules using 4 electrons from cytochrome c in the IMS and 4 protons from the mitochondrial matrix. The polypeptide is Cytochrome c oxidase subunit 3 (MT-CO3) (Pongo abelii (Sumatran orangutan)).